Consider the following 385-residue polypeptide: Probable caffeine synthase MTL2 (385 aa).

S-adenosyl-L-homocysteine is bound by residues Y18, C62, N67, D101, L102, S140, F141, and C157. Caffeine-binding residues include Y158, H161, and W162. Mg(2+) is bound at residue N179. Residue T238 coordinates caffeine. Mg(2+)-binding residues include D261, F263, and N264. Y369 contacts caffeine.

It belongs to the methyltransferase superfamily. Type-7 methyltransferase family. It depends on Mg(2+) as a cofactor.

It functions in the pathway alkaloid biosynthesis. Its function is as follows. May be involved in the biosynthesis of caffeine. This is Probable caffeine synthase MTL2 from Coffea canephora (Robusta coffee).